The following is a 252-amino-acid chain: Chitooligosaccharide deacetylase (252 aa).

Mg(2+)-binding residues include H61 and H125.

Belongs to the YdjC deacetylase family. ChbG subfamily. In terms of assembly, homodimer. Requires Mg(2+) as cofactor.

Its subcellular location is the cytoplasm. It carries out the reaction N,N'-diacetylchitobiose + H2O = N-acetyl-beta-D-glucosaminyl-(1-&gt;4)-D-glucosamine + acetate. The catalysed reaction is diacetylchitobiose-6'-phosphate + H2O = N'-monoacetylchitobiose-6'-phosphate + acetate. It participates in glycan degradation; chitin degradation. Involved in the degradation of chitin. ChbG is essential for growth on the acetylated chitooligosaccharides chitobiose and chitotriose but is dispensable for growth on cellobiose and chitosan dimer, the deacetylated form of chitobiose. Deacetylation of chitobiose-6-P and chitotriose-6-P is necessary for both the activation of the chb promoter by the regulatory protein ChbR and the hydrolysis of phosphorylated beta-glucosides by the phospho-beta-glucosidase ChbF. Catalyzes the removal of only one acetyl group from chitobiose-6-P to yield monoacetylchitobiose-6-P, the inducer of ChbR and the substrate of ChbF. In Salmonella heidelberg (strain SL476), this protein is Chitooligosaccharide deacetylase.